A 340-amino-acid polypeptide reads, in one-letter code: Ketol-acid reductoisomerase (NADP(+)) (340 aa).

A KARI N-terminal Rossmann domain is found at 2 to 182 (ANIYYENHAD…GCTRAGVIET (181 aa)). NADP(+) contacts are provided by residues 25 to 28 (FGSQ), Ser51, Ser53, and 83 to 86 (DTAQ). His108 is an active-site residue. Gly134 serves as a coordination point for NADP(+). The KARI C-terminal knotted domain occupies 183–328 (TFAEETETDL…RELRRMMPFV (146 aa)). The Mg(2+) site is built by Asp191, Glu195, Glu227, and Glu231. Ser252 provides a ligand contact to substrate.

This sequence belongs to the ketol-acid reductoisomerase family. Requires Mg(2+) as cofactor.

It carries out the reaction (2R)-2,3-dihydroxy-3-methylbutanoate + NADP(+) = (2S)-2-acetolactate + NADPH + H(+). The catalysed reaction is (2R,3R)-2,3-dihydroxy-3-methylpentanoate + NADP(+) = (S)-2-ethyl-2-hydroxy-3-oxobutanoate + NADPH + H(+). It functions in the pathway amino-acid biosynthesis; L-isoleucine biosynthesis; L-isoleucine from 2-oxobutanoate: step 2/4. The protein operates within amino-acid biosynthesis; L-valine biosynthesis; L-valine from pyruvate: step 2/4. Its function is as follows. Involved in the biosynthesis of branched-chain amino acids (BCAA). Catalyzes an alkyl-migration followed by a ketol-acid reduction of (S)-2-acetolactate (S2AL) to yield (R)-2,3-dihydroxy-isovalerate. In the isomerase reaction, S2AL is rearranged via a Mg-dependent methyl migration to produce 3-hydroxy-3-methyl-2-ketobutyrate (HMKB). In the reductase reaction, this 2-ketoacid undergoes a metal-dependent reduction by NADPH to yield (R)-2,3-dihydroxy-isovalerate. This is Ketol-acid reductoisomerase (NADP(+)) from Roseiflexus castenholzii (strain DSM 13941 / HLO8).